Consider the following 689-residue polypeptide: DNA ligase (689 aa).

NAD(+) is bound by residues 35-39 (DEVYD), 84-85 (SL), and E122. K124 (N6-AMP-lysine intermediate) is an active-site residue. Residues R145, E182, K308, and K332 each contribute to the NAD(+) site. Residues C426, C429, C444, and C449 each contribute to the Zn(2+) site. The 78-residue stretch at 612–689 (TTEKSLNGKR…NETELIQMCR (78 aa)) folds into the BRCT domain.

It belongs to the NAD-dependent DNA ligase family. LigA subfamily. Mg(2+) is required as a cofactor. Requires Mn(2+) as cofactor.

It catalyses the reaction NAD(+) + (deoxyribonucleotide)n-3'-hydroxyl + 5'-phospho-(deoxyribonucleotide)m = (deoxyribonucleotide)n+m + AMP + beta-nicotinamide D-nucleotide.. Functionally, DNA ligase that catalyzes the formation of phosphodiester linkages between 5'-phosphoryl and 3'-hydroxyl groups in double-stranded DNA using NAD as a coenzyme and as the energy source for the reaction. It is essential for DNA replication and repair of damaged DNA. The chain is DNA ligase from Thermosynechococcus vestitus (strain NIES-2133 / IAM M-273 / BP-1).